The primary structure comprises 311 residues: Protein N-terminal asparagine amidohydrolase (311 aa).

Monomer.

The protein resides in the cytoplasm. The catalysed reaction is N-terminal L-asparaginyl-[protein] + H2O + H(+) = N-terminal L-aspartyl-[protein] + NH4(+). Its function is as follows. N-terminal asparagine deamidase that mediates deamidation of N-terminal asparagine residues to aspartate. Required for the ubiquitin-dependent turnover of intracellular proteins that initiate with Met-Asn. These proteins are acetylated on the retained initiator methionine and can subsequently be modified by the removal of N-acetyl methionine by acylaminoacid hydrolase (AAH). Conversion of the resulting N-terminal asparagine to aspartate by NTAN1/PNAD renders the protein susceptible to arginylation, polyubiquitination and degradation as specified by the N-end rule. This enzyme does not act on substrates with internal or C-terminal asparagines and does not act on glutamine residues in any position. The sequence is that of Protein N-terminal asparagine amidohydrolase (NTAN1) from Sus scrofa (Pig).